The chain runs to 283 residues: Ribosome biogenesis GTPase A (283 aa).

The 165-residue stretch at 14–178 (RREVTEKLKL…LLDTPGILWP (165 aa)) folds into the CP-type G domain. Residues 58-61 (NKAD), 86-87 (NS), 130-135 (NVGKST), and Gly174 each bind GTP.

The protein belongs to the TRAFAC class YlqF/YawG GTPase family. MTG1 subfamily. Interacts with ctc. Interacts with the immature 50S ribosome subunit. 2 molecules of rbgA bind to one 50S subunit.

The protein localises to the cytoplasm. Functionally, essential protein that is required for a late step of 50S ribosomal subunit assembly. Has GTPase activity that is stimulated by interaction with the immature 50S ribosome subunit. Binds to the 23S rRNA. Required for the association of ribosomal proteins rplP and rpmA with the large subunit. The chain is Ribosome biogenesis GTPase A from Bacillus licheniformis (strain ATCC 14580 / DSM 13 / JCM 2505 / CCUG 7422 / NBRC 12200 / NCIMB 9375 / NCTC 10341 / NRRL NRS-1264 / Gibson 46).